Consider the following 210-residue polypeptide: MDLYAIVPVKELRHAKQRLAHALDAHERQELSLAMLGDVLAALSQSQVRRVTVISRDTAAYQIATAYGAVIAVDQTSDLNAALYQAAVDVPDDAAILIVPSDVPLLRADDVMMLAAQPGVAITPAHDGGTNLLLTPAIRGWTFLFGPDSFVRHCAEARRRGWTVHVVRLPHLERDIDEVDDLVWLAQQPGHTAAQRLAREFLMRKGARIW.

Residues threonine 130, glycine 146, and serine 149 each contribute to the phosphoenolpyruvate site.

Belongs to the CofC family.

It carries out the reaction phosphoenolpyruvate + GTP + H(+) = enolpyruvoyl-2-diphospho-5'-guanosine + diphosphate. Its pathway is cofactor biosynthesis; coenzyme F420 biosynthesis. Guanylyltransferase that catalyzes the activation of phosphoenolpyruvate (PEP) as enolpyruvoyl-2-diphospho-5'-guanosine, via the condensation of PEP with GTP. It is involved in the biosynthesis of coenzyme F420, a hydride carrier cofactor. This chain is Phosphoenolpyruvate guanylyltransferase, found in Roseiflexus castenholzii (strain DSM 13941 / HLO8).